The following is a 728-amino-acid chain: 1,4-alpha-glucan branching enzyme GlgB (728 aa).

Residue Asp405 is the Nucleophile of the active site. The Proton donor role is filled by Glu458.

It belongs to the glycosyl hydrolase 13 family. GlgB subfamily. Monomer.

It carries out the reaction Transfers a segment of a (1-&gt;4)-alpha-D-glucan chain to a primary hydroxy group in a similar glucan chain.. It participates in glycan biosynthesis; glycogen biosynthesis. In terms of biological role, catalyzes the formation of the alpha-1,6-glucosidic linkages in glycogen by scission of a 1,4-alpha-linked oligosaccharide from growing alpha-1,4-glucan chains and the subsequent attachment of the oligosaccharide to the alpha-1,6 position. The sequence is that of 1,4-alpha-glucan branching enzyme GlgB from Shigella flexneri serotype 5b (strain 8401).